Reading from the N-terminus, the 396-residue chain is Elongation factor Tu (396 aa).

A tr-type G domain is found at 10-205 (KPHVNIGTIG…ACDDNIPDPV (196 aa)). Residues 19–26 (GHVDHGKT) form a G1 region. 19-26 (GHVDHGKT) contacts GTP. Mg(2+) is bound at residue threonine 26. The interval 62–66 (GITIN) is G2. The interval 83 to 86 (DAPG) is G3. GTP is bound by residues 83 to 87 (DAPGH) and 138 to 141 (NKCD). Positions 138-141 (NKCD) are G4. The tract at residues 175–177 (SAL) is G5.

Belongs to the TRAFAC class translation factor GTPase superfamily. Classic translation factor GTPase family. EF-Tu/EF-1A subfamily. Monomer.

It is found in the cytoplasm. The enzyme catalyses GTP + H2O = GDP + phosphate + H(+). In terms of biological role, GTP hydrolase that promotes the GTP-dependent binding of aminoacyl-tRNA to the A-site of ribosomes during protein biosynthesis. The sequence is that of Elongation factor Tu from Corynebacterium glutamicum (strain ATCC 13032 / DSM 20300 / JCM 1318 / BCRC 11384 / CCUG 27702 / LMG 3730 / NBRC 12168 / NCIMB 10025 / NRRL B-2784 / 534).